Here is a 409-residue protein sequence, read N- to C-terminus: Ribose-phosphate pyrophosphokinase 3, chloroplastic (409 aa).

2 stretches are compositionally biased toward low complexity: residues 1–16 and 34–43; these read MATAASASASASPAAA and PASAFARPSP. The segment at 1-43 is disordered; it reads MATAASASASASPAAAFGAKTRRPGPSPSPSPSPASAFARPSP. The N-terminal 44 residues, 1 to 44, are a transit peptide targeting the chloroplast; it reads MATAASASASASPAAAFGAKTRRPGPSPSPSPSPASAFARPSPR. Positions 229 and 231 each coordinate Mg(2+). The tract at residues 312-327 is binding of phosphoribosylpyrophosphate; it reads GRHVVIVDDLVQSGGT.

It belongs to the ribose-phosphate pyrophosphokinase family. Mg(2+) serves as cofactor.

It localises to the plastid. It is found in the chloroplast. It catalyses the reaction D-ribose 5-phosphate + ATP = 5-phospho-alpha-D-ribose 1-diphosphate + AMP + H(+). This is Ribose-phosphate pyrophosphokinase 3, chloroplastic from Oryza sativa subsp. japonica (Rice).